The sequence spans 113 residues: Large ribosomal subunit protein uL22 (113 aa).

The protein belongs to the universal ribosomal protein uL22 family. Part of the 50S ribosomal subunit.

This protein binds specifically to 23S rRNA; its binding is stimulated by other ribosomal proteins, e.g. L4, L17, and L20. It is important during the early stages of 50S assembly. It makes multiple contacts with different domains of the 23S rRNA in the assembled 50S subunit and ribosome. In terms of biological role, the globular domain of the protein is located near the polypeptide exit tunnel on the outside of the subunit, while an extended beta-hairpin is found that lines the wall of the exit tunnel in the center of the 70S ribosome. This is Large ribosomal subunit protein uL22 from Halothermothrix orenii (strain H 168 / OCM 544 / DSM 9562).